Here is a 566-residue protein sequence, read N- to C-terminus: MRQSTYLAPTMRDVPADAEAISHQLMLRAGMMRQIAAGVYAYLPLAKRTIAKIEAIIREELDAIGAQELTLPSLHPAELWQASGRWEAMGDELVRLKDRHNRDFALGPTHEEVITSLIKDGIASYKKLPLCVYQVQTKFRDERRPRFGLLRGREFIMKDAYSFHDSPESLDEAYWQMHGAYSRIFTRVGLEFRPVIADSGAMGGKDTHEFMALASVGEDTVVYSDGSDYAANLEMAKAALPEAPSVQAHGLLEKRATPEAKTVDEAAEALGFDADDIFKALVVVVDDVLSLFILRGNDELNEVKALHELGAKTLRMASEEEVVAAFGATPGSIGPVGVKDVPIYADYRIRSMERIACGANETGYHYVNVGPGRDYEVTAYKDLRTVREGDPSPDGKGTLRFAEGIEIGQIFKLGTRYSESLDAKYLDGQGKAQPFLMGCYGIGVSRTLAAVIEQHHDEAGIVWPKAVAPFDVHLLALNVKNEDQKTLAEQLYSDIRQAGIDVLYDDRPERAGVKFKDADLIGLPVRVAVGKRAGEGIIEVKVRKTGEQLELTASELVRWLNDFLRE.

The protein belongs to the class-II aminoacyl-tRNA synthetase family. ProS type 1 subfamily. As to quaternary structure, homodimer.

It localises to the cytoplasm. It carries out the reaction tRNA(Pro) + L-proline + ATP = L-prolyl-tRNA(Pro) + AMP + diphosphate. Functionally, catalyzes the attachment of proline to tRNA(Pro) in a two-step reaction: proline is first activated by ATP to form Pro-AMP and then transferred to the acceptor end of tRNA(Pro). As ProRS can inadvertently accommodate and process non-cognate amino acids such as alanine and cysteine, to avoid such errors it has two additional distinct editing activities against alanine. One activity is designated as 'pretransfer' editing and involves the tRNA(Pro)-independent hydrolysis of activated Ala-AMP. The other activity is designated 'posttransfer' editing and involves deacylation of mischarged Ala-tRNA(Pro). The misacylated Cys-tRNA(Pro) is not edited by ProRS. The chain is Proline--tRNA ligase from Shouchella clausii (strain KSM-K16) (Alkalihalobacillus clausii).